The chain runs to 64 residues: Alpha-mammal toxin BmK-M8 (64 aa).

The region spanning 2 to 64 (RDAYIADSEN…ERIKEPGKCG (63 aa)) is the LCN-type CS-alpha/beta domain. Disulfide bonds link cysteine 12/cysteine 63, cysteine 16/cysteine 36, cysteine 22/cysteine 46, and cysteine 26/cysteine 48.

The protein belongs to the long (4 C-C) scorpion toxin superfamily. Sodium channel inhibitor family. Alpha subfamily. Expressed by the venom gland.

The protein localises to the secreted. Its function is as follows. Alpha toxins bind voltage-independently at site-3 of sodium channels (Nav) and inhibit the inactivation of the activated channels, thereby blocking neuronal transmission. This acidic toxin has a weak toxicity and is active against mammals. The chain is Alpha-mammal toxin BmK-M8 from Olivierus martensii (Manchurian scorpion).